Reading from the N-terminus, the 408-residue chain is Putative gustatory receptor 98c (408 aa).

Residues 1-42 (MEMEAKRSRLLTTARPYLQVLSLFGLTPPAEFFTRTLRKRRR) lie on the Cytoplasmic side of the membrane. A helical transmembrane segment spans residues 43-63 (FCWMAGYSLYLIAILLMVFYE). The Extracellular portion of the chain corresponds to 64 to 92 (FHANIVSLHLEIYKFHVEDFSKVMGRTQK). Residues 93–113 (FLIVAIATCNQLNILLNYGRL) traverse the membrane as a helical segment. Topologically, residues 114–146 (GLIYDEIANLDLGIDKSSKNFCGKSHWWSFRLR) are cytoplasmic. The chain crosses the membrane as a helical span at residues 147–167 (LTLSIGLWMVIIIGVIPRLTL). Topologically, residues 168–183 (GRAGPFFHWVNQVLTQ) are extracellular. The helical transmembrane segment at 184 to 204 (IILIMLQLKGPEYCLFVLLVY) threads the bilayer. At 205-261 (ELILRTRHVLEQLKDDLEDFDCGARIQELCVTLKQNQLLIGRIWRLVDEIGAYFRWS) the chain is on the cytoplasmic side. Residues 262–282 (MTLLFLYNGLTILHVVNWAII) form a helical membrane-spanning segment. Over 283–296 (RSIDPNDCCQLNRL) the chain is Extracellular. The helical transmembrane segment at 297–317 (GSITFLSFNLLLTCFFSECCV) threads the bilayer. Residues 318 to 367 (KTYNSISYILHQIGCLPTAEEFQMLKMGLKEYILQMQHLKLLFTCGGLFD) lie on the Cytoplasmic side of the membrane. Residues 368–388 (INIKLFGGMLVTLCGYVIIIV) form a helical membrane-spanning segment. Residues 389–408 (QFKIQDFALIGYRQNTSDTS) lie on the Extracellular side of the membrane. A glycan (N-linked (GlcNAc...) asparagine) is linked at Asn403.

This sequence belongs to the insect chemoreceptor superfamily. Gustatory receptor (GR) family. Gr2a subfamily.

The protein resides in the cell membrane. Probable gustatory receptor which mediates acceptance or avoidance behavior, depending on its substrates. This is Putative gustatory receptor 98c (Gr98c) from Drosophila melanogaster (Fruit fly).